We begin with the raw amino-acid sequence, 332 residues long: 2,3-diketo-L-gulonate reductase (332 aa).

The Proton donor role is filled by histidine 44. NAD(+)-binding positions include 168 to 174 (ITMVDMS), 224 to 225 (WK), and 304 to 306 (GHE).

Belongs to the LDH2/MDH2 oxidoreductase family. DlgD subfamily. As to quaternary structure, homodimer.

It localises to the cytoplasm. The enzyme catalyses 3-dehydro-L-gulonate + NAD(+) = 2,3-dioxo-L-gulonate + NADH + H(+). It carries out the reaction 3-dehydro-L-gulonate + NADP(+) = 2,3-dioxo-L-gulonate + NADPH + H(+). Functionally, catalyzes the reduction of 2,3-diketo-L-gulonate in the presence of NADH, to form 3-keto-L-gulonate. The sequence is that of 2,3-diketo-L-gulonate reductase from Salmonella paratyphi C (strain RKS4594).